The chain runs to 375 residues: Alcohol dehydrogenase class-3 chain L (375 aa).

Residue Ala-1 is modified to N-acetylalanine. 7 residues coordinate Zn(2+): Cys-46, His-68, Cys-98, Cys-101, Cys-104, Cys-112, and Cys-175.

It belongs to the zinc-containing alcohol dehydrogenase family. Class-III subfamily. Homodimer or heterodimer with H chain. Zn(2+) serves as cofactor.

The protein resides in the cytoplasm. The enzyme catalyses a primary alcohol + NAD(+) = an aldehyde + NADH + H(+). The catalysed reaction is a secondary alcohol + NAD(+) = a ketone + NADH + H(+). It catalyses the reaction S-(hydroxymethyl)glutathione + NADP(+) = S-formylglutathione + NADPH + H(+). It carries out the reaction S-(hydroxymethyl)glutathione + NAD(+) = S-formylglutathione + NADH + H(+). Functionally, class-III ADH is remarkably ineffective in oxidizing ethanol, but it readily catalyzes the oxidation of long-chain primary alcohols and the oxidation of S-(hydroxymethyl) glutathione. In Gadus morhua (Atlantic cod), this protein is Alcohol dehydrogenase class-3 chain L.